The chain runs to 790 residues: SH3 domain-containing protein 19 (790 aa).

Disordered regions lie at residues 21–196 (EGQT…PVLQ) and 241–374 (EPIK…MDLQ). The residue at position 65 (Ser65) is a Phosphoserine. The span at 287–296 (NTFSTVSGKL) shows a compositional bias: polar residues. The span at 336-351 (QQPPTKVPPERPPPPK) shows a compositional bias: pro residues. The interaction with SH3GL1 stretch occupies residues 342–358 (VPPERPPPPKLSATRRS). Polar residues predominate over residues 365–374 (NRSSSDMDLQ). Ser369 is modified (phosphoserine). SH3 domains lie at 415 to 477 (LSVP…PLDE), 495 to 554 (SGAP…VIID), 571 to 630 (VKGS…PVED), 661 to 720 (LPAE…PCPA), and 730 to 789 (PKGR…FLQI). Ser762 is subject to Phosphoserine.

In terms of assembly, interacts with ADAM12. Isoform 4 and isoform 5 (but not isoform 1 and isoform 2) interact with ADAM9, ADAM10, ADAM15 and ADAM17. Interacts with SH3GL1 SH3 domain. Interacts via SH3 3 and SH3 4 or SH3 4 and SH3 5 domains with SOS2. Probably forms a trimeric complex with SH3GL1 and SOS2. Interacts with SH3YL1. Widely expressed with highest levels in heart, skeletal muscle, kidney, liver, placenta, small intestine and lung. Expressed at low levels in colon, thymus, spleen and leukocytes.

The protein resides in the cytoplasm. The protein localises to the nucleus. Its function is as follows. May play a role in regulating A disintegrin and metalloproteases (ADAMs) in the signaling of EGFR-ligand shedding. May be involved in suppression of Ras-induced cellular transformation and Ras-mediated activation of ELK1. Plays a role in the regulation of cell morphology and cytoskeletal organization. The protein is SH3 domain-containing protein 19 (SH3D19) of Homo sapiens (Human).